Here is a 339-residue protein sequence, read N- to C-terminus: MVREEVAGSTQTLQWKCVESRVDSKRLYYGRFILSPLRKGQADTVGIALRRALLGEIEGTCITRAKFGSVPHEYSTIAGIEESVQEILLNLKEIVLRSNLYGVRDASICVKGPRYITAQDIILPPSVEIVDTAQPIANLTEPIDFCIDLQIKRDRGYQTELRKNYQDGSYPIDAVSMPVRNVNYSIFSCGNGNEKHEILFLEIWTNGSLTPKEALYEASRNLIDLFLPFLHAEEEGTSFEENKNRFTPPPFTFKKRLTNLKKNKKGIPLNCIFIDQLELTSRTYNCLKRANIHTLLDLLSKTEEDLLRIDSFRMEDRKHIWDTLEKHLPIDLLKNKLSF.

Positions 1-233 (MVREEVAGST…DLFLPFLHAE (233 aa)) are alpha N-terminal domain (alpha-NTD). Residues 264–339 (KKGIPLNCIF…IDLLKNKLSF (76 aa)) form an alpha C-terminal domain (alpha-CTD) region.

This sequence belongs to the RNA polymerase alpha chain family. In terms of assembly, in plastids the minimal PEP RNA polymerase catalytic core is composed of four subunits: alpha, beta, beta', and beta''. When a (nuclear-encoded) sigma factor is associated with the core the holoenzyme is formed, which can initiate transcription.

It localises to the plastid. The protein localises to the chloroplast. It catalyses the reaction RNA(n) + a ribonucleoside 5'-triphosphate = RNA(n+1) + diphosphate. Its function is as follows. DNA-dependent RNA polymerase catalyzes the transcription of DNA into RNA using the four ribonucleoside triphosphates as substrates. The protein is DNA-directed RNA polymerase subunit alpha of Thinopyrum elongatum (Tall wheatgrass).